Consider the following 435-residue polypeptide: Methylenetetrahydrofolate--tRNA-(uracil-5-)-methyltransferase TrmFO (435 aa).

FAD is bound at residue Gly9–Gly14.

This sequence belongs to the MnmG family. TrmFO subfamily. It depends on FAD as a cofactor.

Its subcellular location is the cytoplasm. The catalysed reaction is uridine(54) in tRNA + (6R)-5,10-methylene-5,6,7,8-tetrahydrofolate + NADH + H(+) = 5-methyluridine(54) in tRNA + (6S)-5,6,7,8-tetrahydrofolate + NAD(+). It catalyses the reaction uridine(54) in tRNA + (6R)-5,10-methylene-5,6,7,8-tetrahydrofolate + NADPH + H(+) = 5-methyluridine(54) in tRNA + (6S)-5,6,7,8-tetrahydrofolate + NADP(+). Its function is as follows. Catalyzes the folate-dependent formation of 5-methyl-uridine at position 54 (M-5-U54) in all tRNAs. The polypeptide is Methylenetetrahydrofolate--tRNA-(uracil-5-)-methyltransferase TrmFO (Staphylococcus saprophyticus subsp. saprophyticus (strain ATCC 15305 / DSM 20229 / NCIMB 8711 / NCTC 7292 / S-41)).